The following is a 433-amino-acid chain: 23S rRNA (uracil(1939)-C(5))-methyltransferase RlmD (433 aa).

The 59-residue stretch at 10 to 68 folds into the TRAM domain; the sequence is RTTTRQIITVSVNDLDSFGQGVARHNGKTLFIPGLLPQENAEVAVTEDKKQYARAKVVR. The [4Fe-4S] cluster site is built by Cys81, Cys87, Cys90, and Cys162. Positions 265, 294, 299, 315, 342, and 363 each coordinate S-adenosyl-L-methionine. The Nucleophile role is filled by Cys389.

Belongs to the class I-like SAM-binding methyltransferase superfamily. RNA M5U methyltransferase family. RlmD subfamily.

It catalyses the reaction uridine(1939) in 23S rRNA + S-adenosyl-L-methionine = 5-methyluridine(1939) in 23S rRNA + S-adenosyl-L-homocysteine + H(+). Functionally, catalyzes the formation of 5-methyl-uridine at position 1939 (m5U1939) in 23S rRNA. The sequence is that of 23S rRNA (uracil(1939)-C(5))-methyltransferase RlmD from Shigella flexneri.